A 322-amino-acid polypeptide reads, in one-letter code: MTASPSKLAQLRELSVVVADTGDYDAIKRLQPVDCTTNPTLVKKALDLPVYADLLERELAWGRAHGGDDRTTTVDEVADRLTIGVGVKLSALVPGRVSTEVDADLAHDTQATIAKARKFVAMYAERGVPKDKILIKIAATWEGIEAARQLQLEGIDCNLTLIFNRAQALACAEANVFLISPFVGRILDYYVAQGQTPASIDEDPGVVFVRTVYNAFKQRGSSTVVMGASFRSTAQIEALAGCDRLTISPDLLEKLDAEHGELPRKLSPGNANNAQITPIDSDSFASGLAADPMATEKLASGIDTFAKDLHALRKTIADKLAG.

Lysine 136 serves as the catalytic Schiff-base intermediate with substrate.

It belongs to the transaldolase family. Type 1 subfamily. As to quaternary structure, homodimer.

It localises to the cytoplasm. It carries out the reaction D-sedoheptulose 7-phosphate + D-glyceraldehyde 3-phosphate = D-erythrose 4-phosphate + beta-D-fructose 6-phosphate. The protein operates within carbohydrate degradation; pentose phosphate pathway; D-glyceraldehyde 3-phosphate and beta-D-fructose 6-phosphate from D-ribose 5-phosphate and D-xylulose 5-phosphate (non-oxidative stage): step 2/3. Its function is as follows. Transaldolase is important for the balance of metabolites in the pentose-phosphate pathway. In Xanthomonas oryzae pv. oryzae (strain PXO99A), this protein is Transaldolase.